Consider the following 178-residue polypeptide: MVRGLFPGRFQPPHWGHIYAVKEILKEVDEVIIAMGSAQFNYLLKDPFTAGERIWMLREGLREGGVDLSRVVIIPIPNVENNLEWLGRVKSYTPPFDVIYTGNPFVALLFREAGYEVRQQPMFQRERYSSTRVRELLLRGDPSWEELVPKSVAEIIKKLRGAERIKTAASGEAEPHKW.

It belongs to the archaeal NMN adenylyltransferase family.

It localises to the cytoplasm. It catalyses the reaction beta-nicotinamide D-ribonucleotide + ATP + H(+) = diphosphate + NAD(+). The protein operates within cofactor biosynthesis; NAD(+) biosynthesis; NAD(+) from nicotinamide D-ribonucleotide: step 1/1. This Pyrobaculum arsenaticum (strain DSM 13514 / JCM 11321 / PZ6) protein is Nicotinamide-nucleotide adenylyltransferase.